The chain runs to 200 residues: UPF0637 protein LCABL_14170 (200 aa).

Belongs to the UPF0637 family.

This is UPF0637 protein LCABL_14170 from Lacticaseibacillus casei (strain BL23) (Lactobacillus casei).